Reading from the N-terminus, the 116-residue chain is Large ribosomal subunit protein bL19 (116 aa).

It belongs to the bacterial ribosomal protein bL19 family.

Its function is as follows. This protein is located at the 30S-50S ribosomal subunit interface and may play a role in the structure and function of the aminoacyl-tRNA binding site. The chain is Large ribosomal subunit protein bL19 from Pseudomonas entomophila (strain L48).